A 501-amino-acid chain; its full sequence is Beta-glucosidase 25 (501 aa).

A signal peptide spans 1-19; the sequence is MSLLTLVHILVSFSACVEA. Residue Q39 coordinates a beta-D-glucoside. A glycan (N-linked (GlcNAc...) asparagine) is linked at N107. A beta-D-glucoside-binding positions include H140 and 185–186; that span reads NE. Residue E186 is the Proton donor of the active site. C205 and C213 are disulfide-bonded. Residues Y329, E402, W452, 459–460, and F468 each bind a beta-D-glucoside; that span reads EW. E402 (nucleophile) is an active-site residue. N478 is a glycosylation site (N-linked (GlcNAc...) asparagine).

This sequence belongs to the glycosyl hydrolase 1 family.

It catalyses the reaction Hydrolysis of terminal, non-reducing beta-D-glucosyl residues with release of beta-D-glucose.. The chain is Beta-glucosidase 25 (BGLU25) from Oryza sativa subsp. japonica (Rice).